A 4241-amino-acid polypeptide reads, in one-letter code: Intermembrane lipid transfer protein vps13E (4241 aa).

A Chorein N-terminal domain is found at 5-97; it reads ILPGLLKKIL…GPKDIINTFS (93 aa). The segment covering 120–140 has biased composition (low complexity); it reads IDSNSNNNNKKNAPSSSSSND. Disordered regions lie at residues 120–143, 234–340, 942–986, 1220–1256, 1345–1369, 1534–1571, 2148–2192, and 2217–2282; these read IDSN…DDFF, LSKN…QQQQ, LGTG…VEKE, NNNN…NQKP, TTTT…QNRH, KPSS…YNNN, QQQQ…PNVH, and VTEK…NNIN. The span at 234 to 254 shows a compositional bias: polar residues; sequence LSKNTSTHQQQQPTFNPYVGS. Residues 255–264 are compositionally biased toward low complexity; sequence QQQQQQQPQQ. The span at 279-289 shows a compositional bias: polar residues; sequence FMNNKNSDEGI. Composition is skewed to low complexity over residues 290–313, 325–340, and 942–952; these read SSSS…LNDN, QPTP…QQQQ, and LGTGNGINNNN. Over residues 968 to 986 the composition is skewed to basic and acidic residues; sequence DDGKYPEQDDLDDSKVEKE. A compositionally biased stretch (low complexity) spans 1220 to 1253; that stretch reads NNNNNNNNNNNNNNNNNNNNNRNLNNNNNNNNNN. A compositionally biased stretch (basic residues) spans 1352-1369; sequence RYHHQNHHNHQHKKQNRH. Low complexity-rich tracts occupy residues 1538–1551, 1559–1571, and 2148–2177; these read KDNN…NNSD, DSSS…YNNN, and QQQQ…NNNN. Residues 2178–2188 are compositionally biased toward polar residues; it reads VSGNTINNKSV. Positions 2246–2259 are enriched in acidic residues; the sequence is SDDDDDEGEDEDIG. The segment covering 2265–2282 has biased composition (polar residues); sequence DHSTSSAPTSRSNYNNIN. In terms of domain architecture, SHR-BD spans 2825 to 3134; the sequence is KIVFYNQYWI…IPYVWDLPLE (310 aa). Disordered regions lie at residues 3973-4000, 4059-4094, and 4109-4140; these read PTTT…YPTE, YQHS…RQLQ, and KSMA…SGSG. The segment covering 3974-3984 has biased composition (low complexity); it reads TTTTTTNTTTT. A compositionally biased stretch (polar residues) spans 3985 to 4000; sequence PYQSSQNIHSTPYPTE. The span at 4128 to 4140 shows a compositional bias: polar residues; it reads SNNRLSLTPSGSG.

Belongs to the VPS13 family.

It localises to the membrane. Its function is as follows. Mediates the transfer of lipids between membranes at organelle contact sites. The polypeptide is Intermembrane lipid transfer protein vps13E (vps13E) (Dictyostelium discoideum (Social amoeba)).